The primary structure comprises 709 residues: Kelch-like protein 11 (709 aa).

An N-terminal signal peptide occupies residues 1 to 15 (MAAAVAAAAAAAAAA). The BTB domain occupies 95–171 (CDITLCFGGA…MYTGRIRVST (77 aa)). The 103-residue stretch at 206 to 308 (CVAIHSLAHM…KPTYLTRHVK (103 aa)) folds into the BACK domain. Kelch repeat units follow at residues 361-408 (VIMV…ITES), 409-454 (YVYV…EVKG), 456-502 (LYSI…AIED), 504-557 (FVYI…VVNS), and 611-662 (DVFI…HVRI). Serine 466 carries the phosphoserine modification.

Homodimer. Interacts with CUL3. Component of a cullin-RING-based BCR (BTB-CUL3-RBX1) E3 ubiquitin-protein ligase complex.

Component of a cullin-RING-based BCR (BTB-CUL3-RBX1) E3 ubiquitin-protein ligase complex that mediates the ubiquitination of target proteins, leading most often to their proteasomal degradation. The polypeptide is Kelch-like protein 11 (Klhl11) (Mus musculus (Mouse)).